Here is a 185-residue protein sequence, read N- to C-terminus: Ribosome-recycling factor (185 aa).

This sequence belongs to the RRF family.

It localises to the cytoplasm. Its function is as follows. Responsible for the release of ribosomes from messenger RNA at the termination of protein biosynthesis. May increase the efficiency of translation by recycling ribosomes from one round of translation to another. This chain is Ribosome-recycling factor, found in Corynebacterium glutamicum (strain ATCC 13032 / DSM 20300 / JCM 1318 / BCRC 11384 / CCUG 27702 / LMG 3730 / NBRC 12168 / NCIMB 10025 / NRRL B-2784 / 534).